Here is a 1462-residue protein sequence, read N- to C-terminus: Nuclear pore complex protein Nup153 (1462 aa).

Repeat unit 1 spans residues 237–238; the sequence is FG. The segment at 237–1405 is 29 X 2 AA repeats of F-G; the sequence is FGTLSTSLGN…NNPSGVFTFG (1169 aa). Residue Lys-354 forms a Glycyl lysine isopeptide (Lys-Gly) (interchain with G-Cter in SUMO2) linkage. Copy 2 of the repeat occupies 648-649; it reads YG. Residues 653 to 683 form a RanBP2-type 1 zinc finger; it reads KAGSSWQCDTCLLQNKVTDNKCIACQAAKLP. Zn(2+) contacts are provided by Cys-660, Cys-663, Cys-674, and Cys-677. Copy 3 of the repeat occupies 710–711; that stretch reads FG. A RanBP2-type 2 zinc finger spans residues 717 to 746; that stretch reads AIGTWDCDTCLVQNKPEAVKCVACETPKPG. Positions 723, 726, 737, and 740 each coordinate Zn(2+). Copy 4 of the repeat occupies 778 to 779; sequence FG. 2 consecutive RanBP2-type zinc fingers follow at residues 785–814 and 842–871; these read PVGS…EKPG and PEGS…AKPG. Zn(2+) is bound by residues Cys-791, Cys-794, Cys-805, Cys-808, Cys-848, Cys-851, Cys-862, and Cys-865. 25 consecutive repeat copies span residues 894-895, 915-916, 950-951, 972-973, 989-990, 1013-1014, 1073-1074, 1107-1108, 1124-1125, 1161-1162, 1200-1201, 1216-1217, 1228-1229, 1263-1264, 1276-1277, 1278-1279, 1293-1294, 1306-1307, 1314-1315, 1328-1329, 1350-1351, 1362-1363, 1371-1372, 1384-1385, and 1404-1405.

This sequence belongs to the NUP153 family. Part of the nuclear pore complex (NPC). Interacts with TPR (via coiled coil region); the interaction is direct and provides a link between the core structure and the TPR-containing nuclear basket of the nuclear pore complex (NPC). Interacts with HIKESHI. Interacts with SENP2. Interacts with XPO5. Interacts with RAN; the interaction occurs in a GTP- and GDP-independent manner. Interacts with MCM3AP; this interaction is required for MCM3AP localization at the nuclear pore complex. Interacts with MAPK1. The cofactor is Zn(2+).

It is found in the nucleus. The protein resides in the nucleus membrane. It localises to the nuclear pore complex. Its subcellular location is the nucleoplasm. Functionally, component of the nuclear pore complex (NPC), a complex required for the trafficking across the nuclear envelope. Functions as a scaffolding element in the nuclear phase of the NPC essential for normal nucleocytoplasmic transport of proteins and mRNAs. Involved in the quality control and retention of unspliced mRNAs in the nucleus; in association with TPR, regulates the nuclear export of unspliced mRNA species bearing constitutive transport element (CTE) in a NXF1- and KHDRBS1-independent manner. Mediates TPR anchoring to the nuclear membrane at NPC. The repeat-containing domain may be involved in anchoring other components of the NPC to the pore membrane. Possible DNA-binding subunit of the nuclear pore complex (NPC). This chain is Nuclear pore complex protein Nup153 (Nup153), found in Mus musculus (Mouse).